The following is a 954-amino-acid chain: NKSKKRRNRVSFLGAATVEPPKPIPLTWKTEKPVWVNQWPLPKQKLEALHLLANEQLEKGHIEPSFSPWNSPVFVIQKKSGKWRMLTDLRAVNAVIQPMGPLQPGLPSPAMIPKDWPLIIIDLKDCFFTIPLAEQDCEKFAFTIPAINNKEPATRFQWKVLPQGMLNSPTICQTFVGRALQPVREKFSDCYIIHYIDDILCAAETKDKLIDCYTFLQAEVANAGLAIASDKIQTSTPFHYLGMQIENRKIKPQKIEIRKDTLKALNDFQKLLGDINWIRPTLGIPTYAMSNLFSILRGDSDLNSKRMLTPEATKEIKLVEEKIQSAQINRIDPLAPLQLLIFATAHSPTGIIIQNTDLVEWSFLPHSTVKTFTLYLDQIATLIGQTRLRIIKLCGNDPDKIVVPLTKEQVRQAFINSGAWQIGLANFVGIIDNHYPKTKIFQFLKLTTWILPKITRREPLENALTVFTDGSSNGKAAYTGPKERVIKTPYQSAQRAELVAVITVLQDFDINIISDSAYVVQATRDVETALIKYSMDDQLNQLFNLLQQTVRKRNFPFYITHIRAHTNLPGPLTKANKQADLLVSSALIKAQELHALTHVNAAGLKNKFDVTWKLAKDIVQHCTQCQVLHLPTQEAGVNPRGLCPNALWQMDVTHVPSFGRLSYVHVTVDTYSHFIWATCHTGESTSHVKKHLLSCFAVMGVPEKIKTDNGPGYCSKAFQKFLSQWKISHTTGIPYNSQGQAIVERTNRTLKTQLVKQKEGGDSKECTTPQMQLNLALYTLNFLNIYRNQTTTSAEQHLTGKKNSPHEGKLIWWKDNKNKTWEIGKVITWGRGFACVSPGENQLPVWIPTRHLKFYNEPIRDAKKSTSAETETPQSSTVDSQDEQNGDVRRTDEVAIHQEGRAANLGTTKEADAVSYKISREHKGDTNPREYAACSLDDCINGGKSPYACRSSCS.

The Reverse transcriptase domain occupies 57–245 (LEKGHIEPSF…TPFHYLGMQI (189 aa)). The LPQG motif lies at 161 to 164 (LPQG). Positions 195-198 (YIDD) match the YXDD motif. The 129-residue stretch at 460–588 (LENALTVFTD…ADLLVSSALI (129 aa)) folds into the RNase H type-1 domain. Mg(2+)-binding residues include Asp469, Glu497, Asp515, and Asp580. The Integrase-type zinc-finger motif lies at 585 to 626 (SALIKAQELHALTHVNAAGLKNKFDVTWKLAKDIVQHCTQCQ). Residues His594, His598, Cys622, and Cys625 each coordinate Zn(2+). The Integrase catalytic domain maps to 640–801 (RGLCPNALWQ…TSAEQHLTGK (162 aa)). Residues 809-857 (KLIWWKDNKNKTWEIGKVITWGRGFACVSPGENQLPVWIPTRHLKFYNE) constitute a DNA-binding region (integrase-type). The segment at 862 to 888 (AKKSTSAETETPQSSTVDSQDEQNGDV) is disordered. Residues 867–879 (SAETETPQSSTVD) are compositionally biased toward polar residues.

It belongs to the beta type-B retroviral polymerase family. HERV class-II K(HML-2) pol subfamily.

The enzyme catalyses DNA(n) + a 2'-deoxyribonucleoside 5'-triphosphate = DNA(n+1) + diphosphate. It catalyses the reaction Endonucleolytic cleavage to 5'-phosphomonoester.. Its function is as follows. Early post-infection, the reverse transcriptase converts the viral RNA genome into double-stranded viral DNA. The RNase H domain of the reverse transcriptase performs two functions. It degrades the RNA template and specifically removes the RNA primer from the RNA/DNA hybrid. Following nuclear import, the integrase catalyzes the insertion of the linear, double-stranded viral DNA into the host cell chromosome. Endogenous Pol proteins may have kept, lost or modified their original function during evolution. The chain is Endogenous retrovirus group K member 25 Pol protein (ERVK-25) from Homo sapiens (Human).